Consider the following 304-residue polypeptide: Sulfate adenylyltransferase subunit 2 2 (304 aa).

Belongs to the PAPS reductase family. CysD subfamily. As to quaternary structure, heterodimer composed of CysD, the smaller subunit, and CysN.

The catalysed reaction is sulfate + ATP + H(+) = adenosine 5'-phosphosulfate + diphosphate. Its pathway is sulfur metabolism; hydrogen sulfide biosynthesis; sulfite from sulfate: step 1/3. Functionally, with CysN forms the ATP sulfurylase (ATPS) that catalyzes the adenylation of sulfate producing adenosine 5'-phosphosulfate (APS) and diphosphate, the first enzymatic step in sulfur assimilation pathway. APS synthesis involves the formation of a high-energy phosphoric-sulfuric acid anhydride bond driven by GTP hydrolysis by CysN coupled to ATP hydrolysis by CysD. In Marinobacter nauticus (strain ATCC 700491 / DSM 11845 / VT8) (Marinobacter aquaeolei), this protein is Sulfate adenylyltransferase subunit 2 2.